The sequence spans 239 residues: Large ribosomal subunit protein uL30 (239 aa).

A disordered region spans residues 1 to 37 (MSKFVPENVQKKLARDEKLRKAKAEQRKASSAQMKQR). A compositionally biased stretch (basic and acidic residues) spans 9–28 (VQKKLARDEKLRKAKAEQRK).

The protein belongs to the universal ribosomal protein uL30 family.

The polypeptide is Large ribosomal subunit protein uL30 (RPL7) (Tetrahymena thermophila).